We begin with the raw amino-acid sequence, 82 residues long: Beta-insect toxin AaBTxL1 (82 aa).

The signal sequence occupies residues 1 to 22 (MMKLVLFSVIVILFSLIGSIHG). In terms of domain architecture, LCN-type CS-alpha/beta spans 25 to 82 (VPGNYPLDRSGKKYPCTITWKKNPSCIQICKKHGVKYGYCFDFQCWCEIFGRLKTFKI). Disulfide bonds link cysteine 40/cysteine 64, cysteine 50/cysteine 69, and cysteine 54/cysteine 71.

The protein belongs to the long (3 C-C) scorpion toxin superfamily. Sodium channel inhibitor family. Beta subfamily. Expressed by the venom gland.

Its subcellular location is the secreted. Its function is as follows. Shifts the voltage of activation of para/tipE voltage-dependent sodium channels (Nav) toward more negative potentials. The sequence is that of Beta-insect toxin AaBTxL1 from Androctonus australis (Sahara scorpion).